Here is an 833-residue protein sequence, read N- to C-terminus: DNA ligase (833 aa).

NAD(+)-binding positions include 35 to 39 (DVEYD), 84 to 85 (SL), and E115. The active-site N6-AMP-lysine intermediate is the K117. The NAD(+) site is built by R138, E175, K292, and K316. Residues C410, C413, C428, and C434 each contribute to the Zn(2+) site. Residues 750–833 (VQAGPLDGQT…AFLSEHGQAV (84 aa)) form the BRCT domain.

The protein belongs to the NAD-dependent DNA ligase family. LigA subfamily. Mg(2+) serves as cofactor. Mn(2+) is required as a cofactor.

It carries out the reaction NAD(+) + (deoxyribonucleotide)n-3'-hydroxyl + 5'-phospho-(deoxyribonucleotide)m = (deoxyribonucleotide)n+m + AMP + beta-nicotinamide D-nucleotide.. Functionally, DNA ligase that catalyzes the formation of phosphodiester linkages between 5'-phosphoryl and 3'-hydroxyl groups in double-stranded DNA using NAD as a coenzyme and as the energy source for the reaction. It is essential for DNA replication and repair of damaged DNA. The sequence is that of DNA ligase from Xanthomonas campestris pv. campestris (strain 8004).